Reading from the N-terminus, the 232-residue chain is Large ribosomal subunit protein uL1 (232 aa).

Belongs to the universal ribosomal protein uL1 family. As to quaternary structure, part of the 50S ribosomal subunit.

Binds directly to 23S rRNA. The L1 stalk is quite mobile in the ribosome, and is involved in E site tRNA release. In terms of biological role, protein L1 is also a translational repressor protein, it controls the translation of the L11 operon by binding to its mRNA. The sequence is that of Large ribosomal subunit protein uL1 from Marinobacter nauticus (strain ATCC 700491 / DSM 11845 / VT8) (Marinobacter aquaeolei).